A 427-amino-acid chain; its full sequence is Glutamate-1-semialdehyde 2,1-aminomutase (427 aa).

An N6-(pyridoxal phosphate)lysine modification is found at Lys-267.

It belongs to the class-III pyridoxal-phosphate-dependent aminotransferase family. HemL subfamily. Homodimer. Pyridoxal 5'-phosphate is required as a cofactor.

The protein resides in the cytoplasm. The enzyme catalyses (S)-4-amino-5-oxopentanoate = 5-aminolevulinate. Its pathway is porphyrin-containing compound metabolism; protoporphyrin-IX biosynthesis; 5-aminolevulinate from L-glutamyl-tRNA(Glu): step 2/2. This chain is Glutamate-1-semialdehyde 2,1-aminomutase, found in Acetivibrio thermocellus (strain ATCC 27405 / DSM 1237 / JCM 9322 / NBRC 103400 / NCIMB 10682 / NRRL B-4536 / VPI 7372) (Clostridium thermocellum).